Reading from the N-terminus, the 549-residue chain is Peptide transport periplasmic protein SapA (549 aa).

Positions Met-1–Ala-21 are cleaved as a signal peptide.

This sequence belongs to the bacterial solute-binding protein 5 family.

It is found in the periplasm. Its function is as follows. Involved in a peptide intake transport system that plays a role in the resistance to antimicrobial peptides. The protein is Peptide transport periplasmic protein SapA of Salmonella typhimurium (strain LT2 / SGSC1412 / ATCC 700720).